The primary structure comprises 283 residues: GDP-polyphosphate phosphotransferase (283 aa).

This sequence belongs to the polyphosphate kinase 2 (PPK2) family. Class I subfamily.

The catalysed reaction is [phosphate](n) + GTP = [phosphate](n+1) + GDP. Its function is as follows. Uses inorganic polyphosphate (polyP) as a donor to convert GDP to GTP. The chain is GDP-polyphosphate phosphotransferase from Mycolicibacterium smegmatis (strain ATCC 700084 / mc(2)155) (Mycobacterium smegmatis).